An 851-amino-acid chain; its full sequence is DNA mismatch repair protein MutS (851 aa).

602-609 (GPNMSGKS) contacts ATP.

It belongs to the DNA mismatch repair MutS family.

Functionally, this protein is involved in the repair of mismatches in DNA. It is possible that it carries out the mismatch recognition step. This protein has a weak ATPase activity. In Streptococcus pyogenes serotype M4 (strain MGAS10750), this protein is DNA mismatch repair protein MutS.